The primary structure comprises 47 residues: Large ribosomal subunit protein bL27c-2 (47 aa).

This sequence belongs to the bacterial ribosomal protein bL27 family.

It localises to the plastid. Its subcellular location is the chloroplast. The chain is Large ribosomal subunit protein bL27c-2 from Cyanidium caldarium (Red alga).